A 496-amino-acid polypeptide reads, in one-letter code: Cytochrome P450 71B12 (496 aa).

A helical membrane pass occupies residues 2–22 (SLWYIIVAFVFFSSMIIVRII). Cysteine 436 is a binding site for heme.

The protein belongs to the cytochrome P450 family. Heme serves as cofactor.

The protein localises to the membrane. The chain is Cytochrome P450 71B12 (CYP71B12) from Arabidopsis thaliana (Mouse-ear cress).